A 194-amino-acid chain; its full sequence is UPF0215 protein DR_A0167 (194 aa).

This sequence belongs to the UPF0215 family.

The chain is UPF0215 protein DR_A0167 from Deinococcus radiodurans (strain ATCC 13939 / DSM 20539 / JCM 16871 / CCUG 27074 / LMG 4051 / NBRC 15346 / NCIMB 9279 / VKM B-1422 / R1).